We begin with the raw amino-acid sequence, 150 residues long: Small heat shock protein HspE (150 aa).

Positions Val-27–Ala-137 constitute a sHSP domain.

The protein belongs to the small heat shock protein (HSP20) family.

This Bradyrhizobium diazoefficiens (strain JCM 10833 / BCRC 13528 / IAM 13628 / NBRC 14792 / USDA 110) protein is Small heat shock protein HspE (hspE).